The following is a 481-amino-acid chain: Sphingosine kinase 2 (481 aa).

Residues 111–253 (GRPKRLLVFV…VDVATIAQGN (143 aa)) form the DAGKc domain. Residues 121 to 123 (NPF) and T153 each bind ATP. Substrate is bound at residue 178 to 181 (SGDG). The active-site Proton donor/acceptor is the D180. ATP contacts are provided by residues E185 and 210-212 (GTG). D271 lines the substrate pocket. ATP is bound by residues R278, R284, and 441 to 443 (DGE).

The cofactor is Mg(2+). In terms of tissue distribution, highly expressed in flowers and siliques and at lower levels in roots, leaves and stems.

Its subcellular location is the vacuole membrane. It catalyses the reaction a sphingoid base + ATP = a sphingoid 1-phosphate + ADP + H(+). Activated by phosphatidic acid (PA). Binding with PA stimulates the activity by promoting the binding of substrate to the catalytic site. Functionally, involved in the production of sphingolipid metabolites. Phosphorylates sphingosine and various l sphingoid long-chain base (LCB) products, such as phytosphingosine (PHS, 4-hydroxysphinganine), 4-hydroxy-8-sphingenine, 4,8-sphingadienine and D-erythro-dihydrosphingosine, but has a very few activity toward D,L-threo- dihydrosphingosine. Is required for abscisic acid (ABA) signaling that mediates stomatal closure, inhibition of seed germination and root elongation. May function upstream of PLDALPHA1 and phosphatidic acid (PA) in an amplification response to ABA that mediates stomatal closure. This is Sphingosine kinase 2 (SPHK2) from Arabidopsis thaliana (Mouse-ear cress).